The chain runs to 411 residues: Tyrosine--tRNA ligase (411 aa).

Tyr-34 is an L-tyrosine binding site. A 'HIGH' region motif is present at residues 39–48; it reads CTATSLHIGS. Tyr-171 and Gln-175 together coordinate L-tyrosine. The 'KMSKS' region motif lies at 231-235; sequence KMGKT. Residue Lys-234 coordinates ATP. Positions 345-411 constitute an S4 RNA-binding domain; that stretch reads ITAFELFHEA…GKKRHILVKI (67 aa).

This sequence belongs to the class-I aminoacyl-tRNA synthetase family. TyrS type 1 subfamily. Homodimer.

Its subcellular location is the cytoplasm. It carries out the reaction tRNA(Tyr) + L-tyrosine + ATP = L-tyrosyl-tRNA(Tyr) + AMP + diphosphate + H(+). Its function is as follows. Catalyzes the attachment of tyrosine to tRNA(Tyr) in a two-step reaction: tyrosine is first activated by ATP to form Tyr-AMP and then transferred to the acceptor end of tRNA(Tyr). This Rickettsia bellii (strain RML369-C) protein is Tyrosine--tRNA ligase.